The chain runs to 281 residues: PtsGHI operon antiterminator (281 aa).

The tract at residues 1 to 60 (MNGSFTVKKVLNNNVLIASHHKYSEVVLIGKGIGFGKKQDDVIEDKGYDKMFILKDEKEQ) is RNA binding. PRD domains are found at residues 69–174 (YVDE…RPLS) and 175–278 (EVNQ…RLTN). Residues His-104 and His-163 each carry the phosphohistidine; by EII-Glc modification. His-211 carries the post-translational modification Phosphohistidine; by HPr.

This sequence belongs to the transcriptional antiterminator BglG family. GlcT subfamily. As to quaternary structure, homodimer. The monomeric form probably also exists but it would be inactive in RNA binding and antitermination. Phosphorylated by HPr (PtsH) and EII-Glc (PtsG). HPr phosphorylates the PRD 2 domain which has a slight stimulatory effect on GlcT activity, while EII-Glc phosphorylates the PRD 1 domain which inactivates GlcT. The phosphorylation is dependent on the presence or absence of glucose which acts as an inducer of the ptsGHI operon expression. In the presence of glucose the phosphoryl group is transferred from phosphorylated HPr to the sugar via EII-Glc. Under these conditions GlcT is not phosphorylated and binds to the RAT sequence, thus allowing transcription of the ptsGHI operon. In the absence of glucose, phosphorylated EII-Glc accumulates in the cell and phosphorylates the PRD 1 domain of GlcT, leading to its inactivation; this phosphorylation may prevent dimerization of GlcT.

In terms of biological role, mediates the positive regulation of the glucose PTS operon (ptsGHI) by functioning as an antiterminator factor of transcription via its interaction with the RNA-antiterminator (RAT) sequence located upstream of the ptsG gene. The RNA-binding domain of GlcT directly binds to the RNA antiterminator (RAT) sequence and prevents transcriptional termination. GlcT binding requires two identical and nearly symmetrical triple base pairings in the RAT sequence. This is PtsGHI operon antiterminator (glcT) from Bacillus subtilis (strain 168).